Consider the following 607-residue polypeptide: 2-isopropylmalate synthase (607 aa).

Over residues 1–10 the composition is skewed to polar residues; it reads MASFSESLSQ. The disordered stretch occupies residues 1–40; sequence MASFSESLSQDPADAYKSAPSITKPMGPPSPGQPQWNPQR. Residues 75-349 form the Pyruvate carboxyltransferase domain; the sequence is PLWCAVDLRD…DPQIDFSNID (275 aa). Residues Asp-84, His-288, His-290, and Asn-324 each contribute to the Mg(2+) site. The segment at 491–607 is regulatory domain; it reads PVQPLERIKQ…VSAVNRAMPR (117 aa).

Belongs to the alpha-IPM synthase/homocitrate synthase family. LeuA type 2 subfamily. As to quaternary structure, homodimer. Mg(2+) serves as cofactor.

It is found in the cytoplasm. It catalyses the reaction 3-methyl-2-oxobutanoate + acetyl-CoA + H2O = (2S)-2-isopropylmalate + CoA + H(+). The protein operates within amino-acid biosynthesis; L-leucine biosynthesis; L-leucine from 3-methyl-2-oxobutanoate: step 1/4. Catalyzes the condensation of the acetyl group of acetyl-CoA with 3-methyl-2-oxobutanoate (2-ketoisovalerate) to form 3-carboxy-3-hydroxy-4-methylpentanoate (2-isopropylmalate). This Mycobacterium leprae (strain TN) protein is 2-isopropylmalate synthase.